The following is a 394-amino-acid chain: Ceramide glucosyltransferase (394 aa).

Topologically, residues 1–10 (MAVLDLALQG) are lumenal. The helical transmembrane segment at 11-32 (LAIFGCVLFFVLWFMHFLSIVY) threads the bilayer. At 33–195 (TRLHLNKKVS…QVYFGTSHPR (163 aa)) the chain is on the cytoplasmic side. A short sequence motif (D1) is located at residue D92. A short sequence motif (D2) is located at residue D144. Residues 196–215 (SYISANVTGFKCVTGMSCLM) traverse the membrane as a helical segment. The Lumenal segment spans residues 216–287 (RKEVLDQAGG…KLRINMLPAT (72 aa)). A short sequence motif (D3) is located at residue D236. The active-site Proton acceptor is the D236. The short motif at 272–276 (RMIRW) is the (Q/R)XXRW element. The chain crosses the membrane as a helical span at residues 288–304 (IICEPISECFVASLIIG). Residues 305–309 (WAAHH) are Cytoplasmic-facing. A helical transmembrane segment spans residues 310–328 (IFRWDIMVFFMCHCLAWFI). Residues 329 to 348 (FDYIQLRGVQGGPLNFSKLD) are Lumenal-facing. A helical transmembrane segment spans residues 349–369 (YAVAWFIRESMTIYIFLSALW). Residues 370-394 (DPTISWRTGRYRLRCGGTAEEILDV) lie on the Cytoplasmic side of the membrane.

Belongs to the glycosyltransferase 2 family.

Its subcellular location is the golgi apparatus membrane. It catalyses the reaction an N-acylsphing-4-enine + UDP-alpha-D-glucose = a beta-D-glucosyl-(1&lt;-&gt;1')-N-acylsphing-4-enine + UDP + H(+). It carries out the reaction UDP-alpha-D-xylose + an N-acylsphing-4-enine = a beta-D-xylosyl-(1&lt;-&gt;1')-N-acylsphing-4-enine + UDP + H(+). The catalysed reaction is N-(9Z-octadecenoyl)-sphing-4-enine + UDP-alpha-D-xylose = beta-D-xylosyl-(1&lt;-&gt;1')-N-(9Z-octadecenoyl)-sphing-4-enine + UDP + H(+). The protein operates within lipid metabolism; sphingolipid metabolism. Participates in the initial step of the glucosylceramide-based glycosphingolipid/GSL synthetic pathway at the cytosolic surface of the Golgi. Catalyzes the transfer of glucose from UDP-glucose to ceramide to produce glucosylceramide/GlcCer (such as beta-D-glucosyl-(1&lt;-&gt;1')-N-acylsphing-4-enine). Glucosylceramide is the core component of glycosphingolipids/GSLs, amphipathic molecules consisting of a ceramide lipid moiety embedded in the outer leaflet of the membrane, linked to one of hundreds of different externally oriented oligosaccharide structures. Glycosphingolipids are essential components of membrane microdomains that mediate membrane trafficking and signal transduction. They are implicated in many fundamental cellular processes, including growth, differentiation, migration, morphogenesis, cell-to-cell and cell-to-matrix interactions. Catalyzes the synthesis of xylosylceramide/XylCer (such as beta-D-xylosyl-(1&lt;-&gt;1')-N-acylsphing-4-enine) using UDP-Xyl as xylose donor. The sequence is that of Ceramide glucosyltransferase (ugcg) from Xenopus tropicalis (Western clawed frog).